The chain runs to 58 residues: Large ribosomal subunit protein uL30 (58 aa).

It belongs to the universal ribosomal protein uL30 family. Part of the 50S ribosomal subunit.

The sequence is that of Large ribosomal subunit protein uL30 from Bacteroides fragilis (strain ATCC 25285 / DSM 2151 / CCUG 4856 / JCM 11019 / LMG 10263 / NCTC 9343 / Onslow / VPI 2553 / EN-2).